A 520-amino-acid polypeptide reads, in one-letter code: Transposase for insertion sequence element IS21-like (520 aa).

The region spanning 13–78 (YMWYKVRELQ…KYEEYVRGTL (66 aa)) is the HTH IS21-type domain. One can recognise an Integrase catalytic domain in the interval 136 to 312 (LPETPYGEYA…VPSEEFAVEK (177 aa)).

It belongs to the transposase IS21/IS408/IS1162 family.

In terms of biological role, involved in the transposition of the insertion sequence. This Bacteroides fragilis protein is Transposase for insertion sequence element IS21-like (tnpA).